The following is a 354-amino-acid chain: 3-isopropylmalate dehydrogenase (354 aa).

76–87 is an NAD(+) binding site; sequence GPRWDGAKERPE. The substrate site is built by arginine 94, arginine 104, arginine 130, and aspartate 215. Aspartate 215, aspartate 239, and aspartate 243 together coordinate Mg(2+). 273 to 285 lines the NAD(+) pocket; sequence GSAPDIAGKNKAN.

It belongs to the isocitrate and isopropylmalate dehydrogenases family. LeuB type 1 subfamily. In terms of assembly, homodimer. It depends on Mg(2+) as a cofactor. Requires Mn(2+) as cofactor.

The protein localises to the cytoplasm. The enzyme catalyses (2R,3S)-3-isopropylmalate + NAD(+) = 4-methyl-2-oxopentanoate + CO2 + NADH. It participates in amino-acid biosynthesis; L-leucine biosynthesis; L-leucine from 3-methyl-2-oxobutanoate: step 3/4. In terms of biological role, catalyzes the oxidation of 3-carboxy-2-hydroxy-4-methylpentanoate (3-isopropylmalate) to 3-carboxy-4-methyl-2-oxopentanoate. The product decarboxylates to 4-methyl-2 oxopentanoate. The protein is 3-isopropylmalate dehydrogenase of Bacillus cereus (strain ZK / E33L).